Here is a 70-residue protein sequence, read N- to C-terminus: DNA-directed RNA polymerase subunit omega (70 aa).

This sequence belongs to the RNA polymerase subunit omega family. In terms of assembly, the RNAP catalytic core consists of 2 alpha, 1 beta, 1 beta' and 1 omega subunit. When a sigma factor is associated with the core the holoenzyme is formed, which can initiate transcription.

The enzyme catalyses RNA(n) + a ribonucleoside 5'-triphosphate = RNA(n+1) + diphosphate. Its function is as follows. Promotes RNA polymerase assembly. Latches the N- and C-terminal regions of the beta' subunit thereby facilitating its interaction with the beta and alpha subunits. The sequence is that of DNA-directed RNA polymerase subunit omega from Staphylococcus haemolyticus (strain JCSC1435).